We begin with the raw amino-acid sequence, 434 residues long: APETALA2-like protein 2 (434 aa).

The tract at residues 1–116 is disordered; that stretch reads MLLDLNVESP…KTRRGPRSRS (116 aa). A compositionally biased stretch (low complexity) spans 12–23; the sequence is RSGTSSSSVLNS. A compositionally biased stretch (gly residues) spans 25–38; that stretch reads DAGGGGGGGGGGGL. The segment covering 72 to 87 has biased composition (pro residues); it reads LPPPPPAAPSPAPAWQ. The span at 104 to 113 shows a compositional bias: basic residues; sequence VAKKTRRGPR. Residues 106–115 carry the Nuclear localization signal motif; that stretch reads KKTRRGPRSR. 2 DNA-binding regions (AP2/ERF) span residues 118 to 174 and 210 to 267; these read QYRG…INFN and KFRG…TNFE. An EAR motif is present at residues 291–295; it reads LDLRI.

Belongs to the AP2/ERF transcription factor family. AP2 subfamily. In terms of assembly, may form homodimer. Interacts with TPR2/ASP1. Highly expressed in developing panicles and in young seedlings. Present at low levels at all developmental stages.

The protein resides in the nucleus. In terms of biological role, probable transcription factor. Involved in spikelet transition. Together with SNB, controls synergistically inflorescence architecture and floral meristem establishment via the regulation of spatio-temporal expression of B- and E-function floral organ identity genes in the lodicules and of spikelet meristem genes. Prevents lemma and palea elongation as well as grain growth. The protein is APETALA2-like protein 2 of Oryza sativa subsp. japonica (Rice).